A 145-amino-acid polypeptide reads, in one-letter code: Bacilliredoxin SAR1441 (145 aa).

This sequence belongs to the bacilliredoxin family.

This chain is Bacilliredoxin SAR1441, found in Staphylococcus aureus (strain MRSA252).